The chain runs to 617 residues: Chaperone protein HscA homolog (617 aa).

Positions 1–23 (MALLQIAEPGQSSAPHEHKRAAG) are disordered.

Belongs to the heat shock protein 70 family.

In terms of biological role, chaperone involved in the maturation of iron-sulfur cluster-containing proteins. Has a low intrinsic ATPase activity which is markedly stimulated by HscB. The polypeptide is Chaperone protein HscA homolog (Vibrio vulnificus (strain YJ016)).